A 205-amino-acid chain; its full sequence is Protein N-terminal glutamine amidohydrolase (205 aa).

Residues C28, H81, and D97 contribute to the active site.

It belongs to the NTAQ1 family. Monomer.

The protein localises to the cytoplasm. It localises to the cytosol. It is found in the nucleus. The catalysed reaction is N-terminal L-glutaminyl-[protein] + H2O = N-terminal L-glutamyl-[protein] + NH4(+). Functionally, mediates the side-chain deamidation of N-terminal glutamine residues to glutamate, an important step in N-end rule pathway of protein degradation. Conversion of the resulting N-terminal glutamine to glutamate renders the protein susceptible to arginylation, polyubiquitination and degradation as specified by the N-end rule. Does not act on substrates with internal or C-terminal glutamine and does not act on non-glutamine residues in any position. Does not deaminate acetylated N-terminal glutamine. With the exception of proline, all tested second-position residues on substrate peptides do not greatly influence the activity. In contrast, a proline at position 2, virtually abolishes deamidation of N-terminal glutamine. This Homo sapiens (Human) protein is Protein N-terminal glutamine amidohydrolase.